Consider the following 166-residue polypeptide: Phospholipase A2 myotoxin inhibitor protein (166 aa).

Residues Met1–Gly19 form the signal peptide. The C-type lectin domain occupies Leu46–Glu161. Disulfide bonds link Cys83–Cys160 and Cys138–Cys152. N-linked (GlcNAc...) asparagine glycosylation occurs at Asn122.

The protein belongs to the alpha-type phospholipase A2 inhibitor family. In terms of assembly, oligomer. Homotrimer; non-covalently linked. Post-translationally, glycosylated. The glycosylation has no role in the association of this PLI and PA2 enzyme. Expressed by the liver.

Its subcellular location is the secreted. This phospholipase A2 inhibitor binds directly phospholipase A2 in the presence or absence of calcium. Has anti-enzymatic, anti-myotoxic, anti-edema inducing, anti-cytotoxic, anti-bactericidal, and anti-lethal properties against basic and acidic phospholipases A2 from Bothrops venoms. This chain is Phospholipase A2 myotoxin inhibitor protein, found in Bothrops moojeni (Lance-headed viper).